Consider the following 486-residue polypeptide: Protein DETOXIFICATION 27 (486 aa).

The interval 1-25 (MRGGDGEEGSESRVALLKSPHTAEE) is disordered. The next 12 helical transmembrane spans lie at 41-61 (LWQI…MLVI), 74-94 (LAAI…LLLG), 124-144 (IVLF…TPVL), 153-173 (IAEL…AFTL), 189-209 (VTAY…WLFV), 216-236 (VVGT…ILLV), 269-289 (GVML…TGNL), 299-319 (LSIC…FFAG), 349-369 (IIGL…AWIF), 384-404 (LLLA…GVAV), 407-427 (GWQS…GVPL), and 439-461 (VMGI…LSFI).

Belongs to the multi antimicrobial extrusion (MATE) (TC 2.A.66.1) family.

Its subcellular location is the membrane. The protein is Protein DETOXIFICATION 27 of Arabidopsis thaliana (Mouse-ear cress).